Consider the following 230-residue polypeptide: Membrane protein (230 aa).

Topologically, residues 1–24 are virion surface; it reads MSSPTTPVPVISWTADEAIKFLKE. The chain crosses the membrane as a helical span at residues 25 to 45; that stretch reads WNFSLGIIVLFITIILQFGYT. Residues 46-55 lie on the Intravirion side of the membrane; sequence SRSMFVYVIK. A helical transmembrane segment spans residues 56 to 76; it reads MVILWLMWPLTIILTIFNCVY. Residues 77 to 84 lie on the Virion surface side of the membrane; the sequence is ALNNVYLG. The chain crosses the membrane as a helical span at residues 85 to 105; the sequence is FSIVFTIVAIIMWVVYFVNSI. The Intravirion segment spans residues 106–228; the sequence is RLFIRTGSWW…SGMDTALLRN (123 aa).

This sequence belongs to the betacoronaviruses M protein family. As to quaternary structure, homomultimer. Interacts with envelope E protein in the budding compartment of the host cell, which is located between endoplasmic reticulum and the Golgi complex. Forms a complex with HE and S proteins. Interacts with nucleocapsid N protein. This interaction probably participates in RNA packaging into the virus.

Its subcellular location is the virion membrane. It is found in the host Golgi apparatus membrane. Functionally, component of the viral envelope that plays a central role in virus morphogenesis and assembly via its interactions with other viral proteins. The protein is Membrane protein of Porcine hemagglutinating encephalomyelitis virus (strain 67N) (HEV-67N).